A 537-amino-acid polypeptide reads, in one-letter code: Chaperonin GroEL (537 aa).

ATP-binding positions include 29-32, 86-90, Gly413, and Asp492; these read TLGP and DGTTT.

The protein belongs to the chaperonin (HSP60) family. In terms of assembly, forms a cylinder of 14 subunits composed of two heptameric rings stacked back-to-back. Interacts with the co-chaperonin GroES.

The protein localises to the cytoplasm. The catalysed reaction is ATP + H2O + a folded polypeptide = ADP + phosphate + an unfolded polypeptide.. In terms of biological role, together with its co-chaperonin GroES, plays an essential role in assisting protein folding. The GroEL-GroES system forms a nano-cage that allows encapsulation of the non-native substrate proteins and provides a physical environment optimized to promote and accelerate protein folding. The polypeptide is Chaperonin GroEL (Dehalococcoides mccartyi (strain ATCC BAA-2100 / JCM 16839 / KCTC 5957 / BAV1)).